Reading from the N-terminus, the 88-residue chain is Putative membrane protein insertion efficiency factor (88 aa).

Belongs to the UPF0161 family.

It localises to the cell inner membrane. Functionally, could be involved in insertion of integral membrane proteins into the membrane. In Rickettsia canadensis (strain McKiel), this protein is Putative membrane protein insertion efficiency factor.